A 385-amino-acid polypeptide reads, in one-letter code: MTASSSLFSCSMHMEVLTPKISKWPKNFVSCHSKISYVETNYLKSTCYPISRFFCINNLKKTRQRDGIHCFSEGQKFQLDDVVEAQQFDRDILNAIFEVARDMEKIERNSPESQILKGYLMATLFYEPSTRTRLSFESAMRRLGGEVLTTENAREFSSAAKGETLEDTIRTVEGYSDLIVLRHFESGAARRAATIAGIPIVNAGDGPGQHPSQALLDVYTIEREIGKLDGIKVGLVGDLANGRTVRSLTYLLAKYKDVKIYFVSPEVVKMKDDIKDYLTSKGVDWEESSDLVEVASECDVVYQTRIQKERFGERLDLYEKARGKFIVNQNILNAMQRHAVIMHPLPRLDEITVDVDADPRAAYFRQAKYGLYIRMALLKLLLVGW.

Residues 1–30 (MTASSSLFSCSMHMEVLTPKISKWPKNFVS) constitute a chloroplast transit peptide. Positions 131 and 132 each coordinate carbamoyl phosphate. Arg-131 and Thr-132 together coordinate UMP. Residue Lys-161 coordinates L-aspartate. Residues Arg-182, His-210, and Gln-213 each coordinate carbamoyl phosphate. UMP-binding residues include Arg-182 and His-210. Arg-243 and Arg-305 together coordinate UMP. Positions 243 and 305 each coordinate L-aspartate. The carbamoyl phosphate site is built by Leu-345 and Pro-346.

The protein belongs to the aspartate/ornithine carbamoyltransferase superfamily. ATCase family. As to quaternary structure, homotrimer.

It is found in the plastid. It localises to the chloroplast. The enzyme catalyses carbamoyl phosphate + L-aspartate = N-carbamoyl-L-aspartate + phosphate + H(+). The protein operates within pyrimidine metabolism; UMP biosynthesis via de novo pathway; (S)-dihydroorotate from bicarbonate: step 2/3. Feedback inhibited by UMP. Its function is as follows. Catalyzes the condensation of carbamoyl phosphate and aspartate to form carbamoyl aspartate and inorganic phosphate, the committed step in the de novo pyrimidine nucleotide biosynthesis pathway. In Pisum sativum (Garden pea), this protein is Aspartate carbamoyltransferase 2, chloroplastic (PYRB2).